Here is a 65-residue protein sequence, read N- to C-terminus: Large ribosomal subunit protein uL29 (65 aa).

The protein belongs to the universal ribosomal protein uL29 family.

The sequence is that of Large ribosomal subunit protein uL29 from Acidovorax ebreus (strain TPSY) (Diaphorobacter sp. (strain TPSY)).